The sequence spans 372 residues: 4-hydroxy-3-methylbut-2-en-1-yl diphosphate synthase (flavodoxin) (372 aa).

C270, C273, C305, and E312 together coordinate [4Fe-4S] cluster.

Belongs to the IspG family. [4Fe-4S] cluster serves as cofactor.

It carries out the reaction (2E)-4-hydroxy-3-methylbut-2-enyl diphosphate + oxidized [flavodoxin] + H2O + 2 H(+) = 2-C-methyl-D-erythritol 2,4-cyclic diphosphate + reduced [flavodoxin]. Its pathway is isoprenoid biosynthesis; isopentenyl diphosphate biosynthesis via DXP pathway; isopentenyl diphosphate from 1-deoxy-D-xylulose 5-phosphate: step 5/6. Its function is as follows. Converts 2C-methyl-D-erythritol 2,4-cyclodiphosphate (ME-2,4cPP) into 1-hydroxy-2-methyl-2-(E)-butenyl 4-diphosphate. This is 4-hydroxy-3-methylbut-2-en-1-yl diphosphate synthase (flavodoxin) from Escherichia coli (strain SMS-3-5 / SECEC).